A 74-amino-acid chain; its full sequence is ATP synthase F(1) complex subunit epsilon, mitochondrial (74 aa).

It belongs to the eukaryotic ATPase epsilon family. As to quaternary structure, component of the ATP synthase complex composed at least of ATP5F1A/subunit alpha, ATP5F1B/subunit beta, ATP5MC1/subunit c (homooctomer), MT-ATP6/subunit a, MT-ATP8/subunit 8, ATP5ME/subunit e, ATP5MF/subunit f, ATP5MG/subunit g, ATP5MK/subunit k, ATP5MJ/subunit j, ATP5F1C/subunit gamma, ATP5F1D/subunit delta, ATP5F1E/subunit epsilon, ATP5PF/subunit F6, ATP5PB/subunit b, ATP5PD/subunit d, ATP5PO/subunit OSCP. ATP synthase complex consists of a soluble F(1) head domain (subunits alpha(3) and beta(3)) - the catalytic core - and a membrane F(0) domain - the membrane proton channel (subunits c, a, 8, e, f, g, k and j). These two domains are linked by a central stalk (subunits gamma, delta, and epsilon) rotating inside the F1 region and a stationary peripheral stalk (subunits F6, b, d, and OSCP).

The protein resides in the mitochondrion. Its subcellular location is the mitochondrion inner membrane. Its function is as follows. Subunit epsilon, of the mitochondrial membrane ATP synthase complex (F(1)F(0) ATP synthase or Complex V) that produces ATP from ADP in the presence of a proton gradient across the membrane which is generated by electron transport complexes of the respiratory chain. ATP synthase complex consist of a soluble F(1) head domain - the catalytic core - and a membrane F(1) domain - the membrane proton channel. These two domains are linked by a central stalk rotating inside the F(1) region and a stationary peripheral stalk. During catalysis, ATP synthesis in the catalytic domain of F(1) is coupled via a rotary mechanism of the central stalk subunits to proton translocation. In vivo, can only synthesize ATP although its ATP hydrolase activity can be activated artificially in vitro. May be essential for the assembly of F(1) and may play an important role in the incorporation of the hydrophobic subunit c into the F(1)-c oligomer rotor of the mitochondrial ATP synthase complex. The chain is ATP synthase F(1) complex subunit epsilon, mitochondrial from Dictyostelium discoideum (Social amoeba).